Reading from the N-terminus, the 366-residue chain is Histidinol-phosphate aminotransferase (366 aa).

Lys-226 is modified (N6-(pyridoxal phosphate)lysine).

The protein belongs to the class-II pyridoxal-phosphate-dependent aminotransferase family. Histidinol-phosphate aminotransferase subfamily. Requires pyridoxal 5'-phosphate as cofactor.

It catalyses the reaction L-histidinol phosphate + 2-oxoglutarate = 3-(imidazol-4-yl)-2-oxopropyl phosphate + L-glutamate. Its pathway is amino-acid biosynthesis; L-histidine biosynthesis; L-histidine from 5-phospho-alpha-D-ribose 1-diphosphate: step 7/9. This Methanosarcina barkeri (strain Fusaro / DSM 804) protein is Histidinol-phosphate aminotransferase.